An 863-amino-acid chain; its full sequence is DNA mismatch repair protein MutS (863 aa).

ATP is bound at residue 617–624; it reads GPNMGGKS.

It belongs to the DNA mismatch repair MutS family.

Its function is as follows. This protein is involved in the repair of mismatches in DNA. It is possible that it carries out the mismatch recognition step. This protein has a weak ATPase activity. In Pseudomonas fluorescens (strain SBW25), this protein is DNA mismatch repair protein MutS.